The chain runs to 217 residues: GrpE protein homolog 1, mitochondrial (217 aa).

The N-terminal 27 residues, Met1 to Leu27, are a transit peptide targeting the mitochondrion. At Lys94 the chain carries N6-acetyllysine; alternate. Lys94 carries the post-translational modification N6-succinyllysine; alternate. At Lys100 the chain carries N6-acetyllysine. Lys120 carries the post-translational modification N6-succinyllysine. At Lys215 the chain carries N6-acetyllysine; alternate. An N6-succinyllysine; alternate modification is found at Lys215.

It belongs to the GrpE family. Probable component of the PAM complex at least composed of a mitochondrial HSP70 protein, GRPEL1 or GRPEL2, TIMM44, TIMM16/PAM16 and TIMM14/DNAJC19. Binds to HSP70, HSC70 and HSJ1B. In terms of tissue distribution, ubiquitous. Particularly abundant in heart, kidney and liver.

It is found in the mitochondrion matrix. Essential component of the PAM complex, a complex required for the translocation of transit peptide-containing proteins from the inner membrane into the mitochondrial matrix in an ATP-dependent manner. Seems to control the nucleotide-dependent binding of mitochondrial HSP70 to substrate proteins. This is GrpE protein homolog 1, mitochondrial (Grpel1) from Rattus norvegicus (Rat).